Here is a 547-residue protein sequence, read N- to C-terminus: Delta-guaiene synthase 1 (547 aa).

Mg(2+)-binding residues include aspartate 299, aspartate 303, and aspartate 444. Residues 299-303 (DDTYD) carry the DDXXD motif motif.

It belongs to the terpene synthase family. Mg(2+) serves as cofactor.

It catalyses the reaction (2E,6E)-farnesyl diphosphate = delta-guaiene + diphosphate. The enzyme catalyses (2E,6E)-farnesyl diphosphate = alpha-guaiene + diphosphate. Its pathway is secondary metabolite biosynthesis; terpenoid biosynthesis. Its function is as follows. Sesquiterpene synthase involved in the biosynthesis of delta-guaiene (81.2%) and alpha-guaiene (18.1%), two structures composed of five- and seven-membered rings. Also produces 0.7% of alpha-humulene. The sequence is that of Delta-guaiene synthase 1 (C2) from Aquilaria crassna (Eagle wood).